The primary structure comprises 357 residues: MDNSFNDSRRVENCESRQYLLSDESPAISSVMFTAGVLGNLIALALLARRWRGDTGCSAGSRTSISLFHVLVTELVLTDLLGTCLISPVVLASYSRNQTLVALAPESRACTYFAFTMTFFSLATMLMLFAMALERYLAIGHPYFYRRRVSRRGGLAVLPAIYGVSLLFCSLPLLNYGEYVQYCPGTWCFIQHGRTAYLQLYATVLLLLIVAVLGCNISVILNLIRMQLRSKRSRCGLSGSSLRGPGSRRRGERTSMAEETDHLILLAIMTITFAVCSLPFTIFAYMDETSSRKEKWDLRALRFLSVNSIIDPWVFVILRPPVLRLMRSVLCCRTSLRAPEAPGASCSTQQTDLCGQL.

Residues 1–24 are Extracellular-facing; that stretch reads MDNSFNDSRRVENCESRQYLLSDE. N-linked (GlcNAc...) asparagine glycosylation is present at asparagine 6. A helical transmembrane segment spans residues 25–48; that stretch reads SPAISSVMFTAGVLGNLIALALLA. At 49–66 the chain is on the cytoplasmic side; it reads RRWRGDTGCSAGSRTSIS. Residues 67–92 traverse the membrane as a helical segment; that stretch reads LFHVLVTELVLTDLLGTCLISPVVLA. Topologically, residues 93–112 are extracellular; it reads SYSRNQTLVALAPESRACTY. The cysteines at positions 110 and 188 are disulfide-linked. A helical transmembrane segment spans residues 113–133; the sequence is FAFTMTFFSLATMLMLFAMAL. The Cytoplasmic segment spans residues 134–152; it reads ERYLAIGHPYFYRRRVSRR. The chain crosses the membrane as a helical span at residues 153 to 177; that stretch reads GGLAVLPAIYGVSLLFCSLPLLNYG. Topologically, residues 178–199 are extracellular; the sequence is EYVQYCPGTWCFIQHGRTAYLQ. A helical membrane pass occupies residues 200-224; the sequence is LYATVLLLLIVAVLGCNISVILNLI. Topologically, residues 225 to 262 are cytoplasmic; that stretch reads RMQLRSKRSRCGLSGSSLRGPGSRRRGERTSMAEETDH. Positions 235-245 are enriched in low complexity; sequence CGLSGSSLRGP. Residues 235 to 255 are disordered; sequence CGLSGSSLRGPGSRRRGERTS. A helical transmembrane segment spans residues 263-286; the sequence is LILLAIMTITFAVCSLPFTIFAYM. Residues 287–299 are Extracellular-facing; the sequence is DETSSRKEKWDLR. The helical transmembrane segment at 300 to 323 threads the bilayer; that stretch reads ALRFLSVNSIIDPWVFVILRPPVL. Residues 324-357 lie on the Cytoplasmic side of the membrane; the sequence is RLMRSVLCCRTSLRAPEAPGASCSTQQTDLCGQL.

It belongs to the G-protein coupled receptor 1 family.

The protein resides in the cell membrane. Its function is as follows. Receptor for prostaglandin E2 (PGE2). The activity of this receptor is mediated by G(s) proteins that stimulate adenylate cyclase. The subsequent raise in intracellular cAMP is responsible for the relaxing effect of this receptor on smooth muscle. This chain is Prostaglandin E2 receptor EP2 subtype (Ptger2), found in Rattus norvegicus (Rat).